Consider the following 395-residue polypeptide: Probable eukaryotic translation initiation factor 5 (395 aa).

28–35 (GKGNGIKT) provides a ligand contact to GTP. 2 disordered regions span residues 146-171 (PPAKKKSHKHKRDSPVAEEEDGAEDE) and 374-395 (LAEASDESESEDEEEEEEDDDE). Over residues 147-157 (PAKKKSHKHKR) the composition is skewed to basic residues. 2 stretches are compositionally biased toward acidic residues: residues 161–170 (VAEEEDGAED) and 377–395 (ASDESESEDEEEEEEDDDE). The 157-residue stretch at 228–384 (EEAESSRYDQ…AEASDESESE (157 aa)) folds into the W2 domain.

Belongs to the eIF-2-beta/eIF-5 family. In terms of assembly, monomer.

Its function is as follows. Catalyzes the hydrolysis of GTP bound to the 40S ribosomal initiation complex (40S.mRNA.Met-tRNA[F].eIF-2.GTP) with the subsequent joining of a 60S ribosomal subunit resulting in the release of eIF-2 and the guanine nucleotide. The subsequent joining of a 60S ribosomal subunit results in the formation of a functional 80S initiation complex (80S.mRNA.Met-tRNA[F]). The sequence is that of Probable eukaryotic translation initiation factor 5 (tif5) from Schizosaccharomyces pombe (strain 972 / ATCC 24843) (Fission yeast).